Here is a 98-residue protein sequence, read N- to C-terminus: Pore-forming peptide amoebapore A (98 aa).

The first 21 residues, 1–21 (MKAIVFVLIFAVAFAVTATHQ), serve as a signal peptide directing secretion. Residues 22–98 (GEILCNLCTG…NAICAKIHAC (77 aa)) form the Saposin B-type domain. Cystine bridges form between cysteine 26–cysteine 98, cysteine 29–cysteine 92, and cysteine 56–cysteine 67.

In terms of assembly, monomer (at pH below 4 and pH above 6). Homodimer (at pH 4-6). Hexamer; formed during insertion in the membrane.

The protein localises to the cytoplasmic granule. Forms pores in the cell membrane of host cells. Has antibacterial activity against M.luteus, no activity against E.coli. Implicated in the cytolytic activity of the parasite. This chain is Pore-forming peptide amoebapore A, found in Entamoeba histolytica (strain ATCC 30459 / HM-1:IMSS / ABRM).